The sequence spans 350 residues: Izumo sperm-egg fusion protein 1 (350 aa).

The N-terminal stretch at 1 to 21 (MGPHFTLLCAALAGCLLPAEG) is a signal peptide. 5 disulfide bridges follow: Cys-22–Cys-149, Cys-25–Cys-152, Cys-135–Cys-159, Cys-139–Cys-165, and Cys-182–Cys-233. Topologically, residues 22 to 292 (CVICDPSVVL…LQPEKMLASR (271 aa)) are extracellular. Positions 148 to 160 (WCKNCKKEVHACR) are important for interaction with IZUMO1R. The 85-residue stretch at 167–251 (ERNVEVPQME…PATIINFHVT (85 aa)) folds into the Ig-like C2-type domain. An N-linked (GlcNAc...) asparagine glycan is attached at Asn-204. A helical transmembrane segment spans residues 293-313 (LLGLLICGSLALITGLTFAIF). At 314–350 (RRRKVIDFIKSSLFGLGSGAAEQTQVPKEKATDSRQQ) the chain is on the cytoplasmic side. The residue at position 325 (Ser-325) is a Phosphoserine.

The protein belongs to the Izumo family. Monomer, homodimer; disulfide-linked and homooligomer; depending on the context. Interacts with IZUMO1R/JUNO. IZUMO1 and IZUMO1R/JUNO form a complex with 1:1 stoichiometry. In gamete recognition, IZUMO1R/JUNO first binds to monomeric IZUMO1. The weak, but specific interaction with IZUMO1R/JUNO induces IZUMO1 homodimerization. The process follows a tight binding phase where IZUMO1 bends the entire structure towards the sperm membrane side through a thiol-disulfide exchange reaction. The molecule no longer binds to IZUMO1R/JUNO and instead binds to a putative second oocyte receptor. Interacts with ACE3. Part of a oolemmal binding multimeric complex (IZUMO1 complex) composed at least of IZUMO1 and GLIPR1L1; the complex assemblage is influenced by the maturation status of the male germ cell. Interacts with GLIPR1L1. Interacts with FREY; the interaction retains IZUMO1 at the endoplasmic reticulum membrane and coordinates IZUMO1 complex assembly. Interacts with FCRL3/MAIA (via extracellular domain); the interaction replaces IZUMO1R/JUNO as IZUMO1 receptor after sperm-egg adhesion. Interacts with WDR54. Forms a complex with SPACA6 and TMEM81 on spermatocyte cell membrane. Post-translationally, N-glycosylated. Glycosylation is not essential for fusion and for proper protein trafficking in sperm. Phosphorylated. The cytoplasmic C-terminus is phosphorylated and undergoes phosphorylation changes during epididymal transit. Sperm-specific (at protein level). Detectable on sperm surface only after the acrosome reaction.

The protein localises to the cell membrane. It localises to the cytoplasmic vesicle. It is found in the secretory vesicle. Its subcellular location is the acrosome membrane. Its function is as follows. Essential sperm cell-surface protein required for fertilization by acting as a ligand for IZUMO1R/JUNO receptor on egg. The IZUMO1:IZUMO1R/JUNO interaction is a necessary adhesion event between sperm and egg that is required for fertilization but is not sufficient for cell fusion. The ligand-receptor interaction probably does not act as a membrane 'fusogen'. Acts a ligand for the human-specific oolemma epitope FCRL3/MAIA during fertilization. FCRL3/MAIA replaces IZUMO1R/JUNO as IZUMO1 receptor after sperm-egg adhesion, which permits species-specific gamete fusion. Plays a critical role in sperm-oolemma binding prior to plasma membrane fusion. Can mediate cell-cell fusion in cultured mammalian cells independently of its binding to IZUMO1R/JUNO. In Homo sapiens (Human), this protein is Izumo sperm-egg fusion protein 1.